The chain runs to 390 residues: Curcumin synthase 3 (390 aa).

Residue cysteine 164 is part of the active site.

It belongs to the thiolase-like superfamily. Chalcone/stilbene synthases family. As to quaternary structure, homodimer.

The catalysed reaction is (E)-feruloylacetyl-CoA + (E)-feruloyl-CoA + H2O = curcumin + CO2 + 2 CoA. It catalyses the reaction (E)-feruloylacetyl-CoA + (E)-4-coumaroyl-CoA + H2O = demethoxycurcumin + CO2 + 2 CoA. It carries out the reaction (4-coumaroyl)acetyl-CoA + 4-coumaroyl-CoA + H2O = bisdemethoxycurcumin + CO2 + 2 CoA. It functions in the pathway secondary metabolite biosynthesis; flavonoid biosynthesis. In terms of biological role, catalyzes the synthesis of curcumin by condensing feruloyl-CoA with a diketide-CoA in the curcuminoid biosynthesis. Also acts as a demethoxycurcumin synthase by accepting 4-coumaroyl-CoA as a starter substrate instead of feruloyl-CoA. The sequence is that of Curcumin synthase 3 (CURS3) from Curcuma longa (Turmeric).